We begin with the raw amino-acid sequence, 307 residues long: Protoheme IX farnesyltransferase (307 aa).

A run of 8 helical transmembrane segments spans residues 32–52 (VVEL…RGIP), 54–74 (LWLV…AGAF), 105–125 (LVFA…FTNW), 126–146 (LAAG…TLIL), 169–189 (WAVV…VIFL), 222–242 (VVGL…LLLI), 244–264 (VARM…WFLY), and 287–307 (GSIA…LLPF).

The protein belongs to the UbiA prenyltransferase family. Protoheme IX farnesyltransferase subfamily.

The protein resides in the cell membrane. The enzyme catalyses heme b + (2E,6E)-farnesyl diphosphate + H2O = Fe(II)-heme o + diphosphate. Its pathway is porphyrin-containing compound metabolism; heme O biosynthesis; heme O from protoheme: step 1/1. Functionally, converts heme B (protoheme IX) to heme O by substitution of the vinyl group on carbon 2 of heme B porphyrin ring with a hydroxyethyl farnesyl side group. The chain is Protoheme IX farnesyltransferase from Leifsonia xyli subsp. xyli (strain CTCB07).